The primary structure comprises 1338 residues: Fanconi anemia group I protein (1338 aa).

A Glycyl lysine isopeptide (Lys-Gly) (interchain with G-Cter in ubiquitin) cross-link involves residue K525. 2 positions are modified to phosphoserine: S558 and S561. The residue at position 567 (T567) is a Phosphothreonine.

It belongs to the Fanconi anemia group I protein family. In terms of assembly, homodimer. Part of a FANCI-FANCD2 heterodimeric complex that binds and scans dsDNA for DNA damage. Interacts with FANCL. Interacts with MTMR15/FAN1. Interacts with POLN. Interacts with UBL5; the interaction promotes FANCI homodimerization. Post-translationally, monoubiquitinated by FANCL during S phase and upon genotoxic stress. Deubiquitinated by USP1 as cells enter G2/M, or once DNA repair is completed. Monoubiquitination requires the FANCA-FANCB-FANCC-FANCE-FANCF-FANCG-FANCM complex. Ubiquitination is required for binding to chromatin, DNA repair, and normal cell cycle progression. Monoubiquitination is stimulated by DNA-binding. In terms of processing, phosphorylated in response to DNA damage by ATM and/or ATR. Phosphorylation of FANCI promotes ubiquitination of FANCD2, which prevents DNA release from the FANCI-FANCD2 complex.

In terms of biological role, plays an essential role in the repair of DNA double-strand breaks by homologous recombination and in the repair of interstrand DNA cross-links (ICLs) by promoting FANCD2 monoubiquitination by FANCL and participating in recruitment to DNA repair sites. The FANCI-FANCD2 complex binds and scans double-stranded DNA (dsDNA) for DNA damage; this complex stalls at DNA junctions between double-stranded DNA and single-stranded DNA. Participates in S phase and G2 phase checkpoint activation upon DNA damage. The protein is Fanconi anemia group I protein of Gallus gallus (Chicken).